The sequence spans 267 residues: Chaperone protein MyfB (267 aa).

The N-terminal stretch at 1-34 (MKYKFSHNFISYNLFLFVFMSLILLPYSHASSMG) is a signal peptide. Cysteines 127 and 164 form a disulfide.

The protein belongs to the periplasmic pilus chaperone family.

It is found in the periplasm. Its function is as follows. Required for the biogenesis of the MyfA fimbria. In Yersinia enterocolitica, this protein is Chaperone protein MyfB (myfB).